The sequence spans 692 residues: Elongation factor G 2 (692 aa).

A tr-type G domain is found at 8–283; the sequence is EKTRNIGIMA…AVIDYMPSPV (276 aa). GTP is bound by residues 17–24, 81–85, and 135–138; these read AHIDAGKT, DTPGH, and NKMD.

It belongs to the TRAFAC class translation factor GTPase superfamily. Classic translation factor GTPase family. EF-G/EF-2 subfamily.

It is found in the cytoplasm. Catalyzes the GTP-dependent ribosomal translocation step during translation elongation. During this step, the ribosome changes from the pre-translocational (PRE) to the post-translocational (POST) state as the newly formed A-site-bound peptidyl-tRNA and P-site-bound deacylated tRNA move to the P and E sites, respectively. Catalyzes the coordinated movement of the two tRNA molecules, the mRNA and conformational changes in the ribosome. The protein is Elongation factor G 2 of Syntrophotalea carbinolica (strain DSM 2380 / NBRC 103641 / GraBd1) (Pelobacter carbinolicus).